Reading from the N-terminus, the 341-residue chain is MKVKDFDFYLPEELIAQHPMEKRDEARLLVLDKKTGGIEHKIFKDILDYLTPNDCLVLNNTRVLPARLIGAKEETGGKMEFLLLKRKEKDVWETLVKPGKRAQIGARFIFGNGELKAEVIGMGEEGSRIVKFYYEGIFEEILDQLGQMPLPPYIKEKLDDKEMYQTVYSKEEGSAAAPTAGLHFTEELLKKIKEKGVKLAFLTLHVGLGTFRPVKVENIQEHVMHSEYYKMDKETAEIINDTKEKGGRVIAVGTTSCRTLETIGDIEGKVREQSGWTDIFIYPGYKYKVVDALITNFHLPQSTLLMLVSALAGRDNIMNAYNVAVEKEYRFFSFGDAMFIK.

Belongs to the QueA family. Monomer.

Its subcellular location is the cytoplasm. It catalyses the reaction 7-aminomethyl-7-carbaguanosine(34) in tRNA + S-adenosyl-L-methionine = epoxyqueuosine(34) in tRNA + adenine + L-methionine + 2 H(+). It functions in the pathway tRNA modification; tRNA-queuosine biosynthesis. Transfers and isomerizes the ribose moiety from AdoMet to the 7-aminomethyl group of 7-deazaguanine (preQ1-tRNA) to give epoxyqueuosine (oQ-tRNA). This Clostridium botulinum (strain Kyoto / Type A2) protein is S-adenosylmethionine:tRNA ribosyltransferase-isomerase.